The primary structure comprises 374 residues: Queuine tRNA-ribosyltransferase (374 aa).

The Proton acceptor role is filled by Asp89. Substrate is bound by residues 89-93 (DSGGF), Asp143, Gln187, and Gly214. Residues 245 to 251 (GVGKPED) form an RNA binding region. Asp264 acts as the Nucleophile in catalysis. The interval 269-273 (TRNAR) is RNA binding; important for wobble base 34 recognition. Zn(2+) contacts are provided by Cys302, Cys304, Cys307, and His333.

The protein belongs to the queuine tRNA-ribosyltransferase family. As to quaternary structure, homodimer. Within each dimer, one monomer is responsible for RNA recognition and catalysis, while the other monomer binds to the replacement base PreQ1. Zn(2+) serves as cofactor.

It carries out the reaction 7-aminomethyl-7-carbaguanine + guanosine(34) in tRNA = 7-aminomethyl-7-carbaguanosine(34) in tRNA + guanine. It participates in tRNA modification; tRNA-queuosine biosynthesis. Functionally, catalyzes the base-exchange of a guanine (G) residue with the queuine precursor 7-aminomethyl-7-deazaguanine (PreQ1) at position 34 (anticodon wobble position) in tRNAs with GU(N) anticodons (tRNA-Asp, -Asn, -His and -Tyr). Catalysis occurs through a double-displacement mechanism. The nucleophile active site attacks the C1' of nucleotide 34 to detach the guanine base from the RNA, forming a covalent enzyme-RNA intermediate. The proton acceptor active site deprotonates the incoming PreQ1, allowing a nucleophilic attack on the C1' of the ribose to form the product. After dissociation, two additional enzymatic reactions on the tRNA convert PreQ1 to queuine (Q), resulting in the hypermodified nucleoside queuosine (7-(((4,5-cis-dihydroxy-2-cyclopenten-1-yl)amino)methyl)-7-deazaguanosine). This Yersinia pseudotuberculosis serotype O:1b (strain IP 31758) protein is Queuine tRNA-ribosyltransferase.